Reading from the N-terminus, the 279-residue chain is Protein phosphatase 1 regulatory subunit 3E (279 aa).

A phosphoserine mark is found at serine 16 and serine 33. The interval 28 to 87 (RSQRPSLEEESEEEPGEGGTRPGARSRAHVPGRGRRARSAPAGGGGARTARSRSPDTRKR) is disordered. Residues 51-65 (ARSRAHVPGRGRRAR) show a composition bias toward basic residues. Serine 66 carries the post-translational modification Phosphoserine. The short motif at 87 to 90 (RVRF) is the PP1-binding motif element. One can recognise a CBM21 domain in the interval 154-259 (AARLQAQRIC…NNGGRDYALL (106 aa)). Positions 176–198 (GSARVLDLAYEKRVSVRWSADGW) are glycogen-binding motif. The substrate-binding motif stretch occupies residues 248-256 (WDNNGGRDY).

Functionally, acts as a glycogen-targeting subunit for PP1. PP1 is involved in glycogen metabolism and contributes to the activation of glycogen synthase leading to an increase in glycogen synthesis. The sequence is that of Protein phosphatase 1 regulatory subunit 3E (Ppp1r3e) from Mus musculus (Mouse).